A 2344-amino-acid chain; its full sequence is MAAMSRLTGMTTAILPEKKPLNFFLDLRDKTPPCCIRATGKLAWPVFLGQYGKEGPLETCNKCGKWLNGFGCFGLEDLGDVCLCSIAQQKHKFGPVCLCNRAYIHDCGRWRRRSRFLKHYKALNKVIPCAYQFDESFSTPVFEGEVDDLFVELGAPTSMGFMDKKLLKKGKKLMDKFVDVDEPCLTSRDASLLDSIASDNTIRAKWEEEYGVEMVQAARDRKDFMKNLRLALDNRPANPVTWYTKLGNITEKGKQWAKKVVYGACKVTDPLKTLASILLVGLHNVIAVDTTVMLSTFKPVNLLAILMDWTNDLTGFVTTLVRLLELYGVVQATVNLIVEGVKSFWDKVVCATDRCFDLLKRLFDTFEDSVPTGPTAGCLIFMAFVFSTVVGYLPNNSVITTFMKGAGKLTTFAGVIGAIRTLWITINQHMVAKDLTSIQQKVMTVVKMANEAATLDQLEIVSCLCSDLENTLTNRCTLPSYNQHLGILNASQKVISDLHTMVLGKINMTKQRPQPVAVIFKGAPGIGKTYLVHRIARDLGCQHPSTINFGLDHFDSYTGEEVAIADEFNTCGDGESWVELFIQMVNTNPCPLNCDKAENKNKVFNSKYLLCTTNSNMILNATHPRAGAFYRRVMIVEARNKAVESWQATRHGSKPGRSCYSKDMSHLTFQVYPHNMPAPGFVFVGDKLVKSQVAPREYKYSELLDLIKSEHPDVASFEGANRFNFVYPDAQYDQALLMWKQYFVMYGCVARLAKNFVDDIPYNQVHISRASDPKIEGCVEYQCKFQHLWRMVPQFVLGCVNMTNQLGTPLTQQQLDRVTNGVEGVTVTTVNNILPFHSQTTLINPSFIKLIWAVRKHLKGLSGVTKVAQFIWRVMTNPVDAYGSLVRTLTGAATFSDDPVSTTIICSNCTIQIHSCGGLLVRYSRDPVPVASDNVDRGDQGVDVFTDPNLISGFSWRQIAHLFVEVISRLCANHLVNLATMAALGAVATKAFQGVKGKTKRGRGARVNLGNDEYDEWQAARREFVNAHDMTAEEYLAMKNKAAMGSDDQDSVMFRSWWTRRQLRPDEDQVTIVGRGGVRNEVIRTRVRQTPKGPKTLDDGGFYDNDYEGLPGFMRHNGSGWMIHIGNGLYISNTHTARSSCSEVVTCSPTTDLCLVKGEAIRSVAQIAEGTPVCDWKKSPISTYGIKKTLSDSTKIDVLAYDGCTQTTHGDCGLPLYDSSGKIVAIHTGKLLGFSKMCTLIDLTITKGVYETSNFFCGEPIDYRGITAHRLVGAEPRPPVSGTRYAKVPGVPEEYKTGYRPANLGRSDPDSDKSLMNIAVKNLQVYQQEPKLDKVDEFIERAAADVLGYLRFLTKGERQVNLNFKAAFNTLDLSTSCGPFVPGKKIDHVKDGVMDQVLAKHLYKCWSVANSGKALHHIYACGLKDELRPLDKVKEGKKRLLWGCDVGVAVCAAAVFHNICYKLKMVARFGPIAVGVDMTSRDVDVIINNLTSKASDFLCLDYSKWDSTMSPCVVRLAIDILADCCEQTELTKSVVLTLKSHPMTILDAMIVQTKRGLPSGMPFTSVINSICHWLLWSAAVYKSCAEIGLHCSNLYEDAPFYTYGDDGVYAMTPMMVSLLPAIIENLRDYGLLPTAADKTEFIDVCPLNKISFLKRTFELTDIGWISKLDKSSILRQLEWSKTTSRHMMIEETYDLAKEERGVQLEELQVAAAAHGQEFFNFVRKELERQQAYTQFSVYSYDAARKILADRKRVVSVVPDDEFVNVMEGKARTAPQGEAAGTATTASVPGTTTDGMDPGVVATTSVVTAENSSASIATAGIGGPPQQVDQQETWRTNFYYNDVFTWSVADAPGSILYTVQHSPQNNPFTAVLSQMYAGWAGGMQFRFIVAGSGVFGGRLVAAVIPPGIEIGPGLEVRQFPHVVIDARSLEPVTITMPDLRPNMYHPTGDPGLVPTLVLSVYNNLINPFGGSTSAIQVTVETRPSEDFEFVMIRAPSSKTVDSISPAGLLTTPVLTGVGNDNRWNGQIVGLQPVPGGFSTCNRHWNLNGSTYGWSSPRFADIDHRRGSASYPGNNATNVLQFWYANAGSAIDNPISQVAPDGFPDMSFVPFNGPGIPAAGWVGFGAIWNSNSGAPNVTTVQAYELGFATGAPGNLQPTTNTSGSQTVAKSIYAVVTGTAQNPAGLFVMASGVISTPSANAITYTPQPDRIVTTPGTPAAAPVGKNTPIMFASVVRRTGDVNATAGSANGTQYGRGSQPLPVTIGLSLNNYSSALMPGQFFVWQLTFASGFMEIGLSVDGYFYAGTGASTTLIDLIELIDVRPVGPRPSKSTLVFNLGGTANGFSYV.

One can recognise an SF3 helicase domain in the interval 492-653 (QKVISDLHTM…ESWQATRHGS (162 aa)). Residue 522 to 529 (GAPGIGKT) participates in ATP binding. Position 1014 is an O-(5'-phospho-RNA)-tyrosine (Tyr-1014). At Tyr-1014 the chain carries O-UMP-tyrosine; transient. Residues 1109-1244 (GLPGFMRHNG…SKMCTLIDLT (136 aa)) enclose the Peptidase C24 domain. Catalysis depends on for 3CLpro activity residues His-1135, Asp-1152, and Cys-1212. In terms of domain architecture, RdRp catalytic spans 1495–1619 (SDFLCLDYSK…AMTPMMVSLL (125 aa)). A disulfide bond links Cys-1584 and Cys-1591. A disordered region spans residues 1771–1796 (RTAPQGEAAGTATTASVPGTTTDGMD). The segment covering 1778–1794 (AAGTATTASVPGTTTDG) has biased composition (low complexity).

As to quaternary structure, homodimer. Homomultimer. Interacts with host type II histo-blood group structures antigens at the surface of target cells. Requires Mn(2+) as cofactor. In terms of processing, specific enzymatic cleavages by its own cysteine protease yield mature proteins. The protease cleaves itself from the nascent polyprotein autocatalytically. Precursor p41 can be cleaved by viral 3CLpro into protein p19 and VPg, or cleaved by host protease into protein p23/2 and protein p18. VPg is uridylylated by the polymerase and is covalently attached to the 5'-end of the polyadenylated genomic and subgenomic RNAs. This uridylylated form acts as a nucleotide-peptide primer for the polymerase.

It localises to the host cytoplasm. The protein localises to the host endoplasmic reticulum. The protein resides in the virion. The catalysed reaction is a ribonucleoside 5'-triphosphate + H2O = a ribonucleoside 5'-diphosphate + phosphate + H(+). It carries out the reaction Endopeptidase with a preference for cleavage when the P1 position is occupied by Glu-|-Xaa and the P1' position is occupied by Gly-|-Yaa.. The enzyme catalyses RNA(n) + a ribonucleoside 5'-triphosphate = RNA(n+1) + diphosphate. Together with NTPase and NS4, initiates the formation of the replication complex. Induces the proliferation of the host smooth ER membranes forming long tubular structures. These remodeled membranes probably form the viral factories that contain the replication complex. In terms of biological role, displays NTPase activity, but no helicase activity. Induces the formation of convoluted membranes derived from the host ER. These remodeled membranes probably form the viral factories that contain the replication complex. Together with NS2 and NS4, initiates the formation of the replication complex. Functionally, probable key protein responsible for the formation of membrane alterations by the virus. Induces the formation of convoluted membranes derived from the host ER. These remodeled membranes probably form the viral factories that contain the replication complex. Together with NS2 and NTPase, initiates the formation of the replication complex. Its function is as follows. Viral genome-linked protein is covalently linked to the 5'-end of the positive-strand, negative-strand genomic RNAs and subgenomic RNA. Acts as a genome-linked replication primer. May recruit ribosome to viral RNA thereby promoting viral proteins translation. Interacts with host translation initiation complex to allow the translation of viral proteins. Processes the polyprotein. 3CLpro-RdRp is first released by autocleavage, then all other proteins are cleaved. May cleave polyadenylate-binding protein thereby inhibiting cellular translation. In terms of biological role, replicates genomic and antigenomic RNA by recognizing replications specific signals. Also transcribes a subgenomic mRNA by initiating RNA synthesis internally on antigenomic RNA. This sgRNA codes for structural proteins. Catalyzes the covalent attachment VPg with viral RNAs. Functionally, capsid protein VP60 self assembles to form an icosahedral capsid with a T=3 symmetry, about 35 nm in diameter, and consisting of 180 capsid proteins. A smaller form of capsid with a diameter of 23 nm might be capsid proteins assembled as icosahedron with T=1 symmetry. The capsid encapsulate VP2 proteins and genomic or subgenomic RNA. Attaches virion to target cells by binding histo-blood group antigens, inducing endocytosis of the viral particle. Acidification of the endosome induces conformational change of capsid protein thereby injecting virus genomic RNA into host cytoplasm. The sequence is that of Genome polyprotein from Rabbit hemorrhagic disease virus (strain SD) (Ra/LV/RHDV/SD/1989/FR).